We begin with the raw amino-acid sequence, 227 residues long: UPF0659 protein YMR090W (227 aa).

This sequence belongs to the UPF0659 family.

It is found in the cytoplasm. In Saccharomyces cerevisiae (strain ATCC 204508 / S288c) (Baker's yeast), this protein is UPF0659 protein YMR090W.